Reading from the N-terminus, the 173-residue chain is UPF0598 protein F59C6.12 (173 aa).

It belongs to the UPF0598 family.

The polypeptide is UPF0598 protein F59C6.12 (Caenorhabditis elegans).